The primary structure comprises 673 residues: MPSLRTRREEAEMELSAPGPSPWTPAPQARVSDAPAVTHPGSAACGTPCCSDTELEAICPHYQQPDCDTRTEDKEFLHKEDIHEDLESQAEISENYAGDVFQVPKLGDLCDDVSERDWGVPEGRRLPQSLSQEGDFTPAAMGLLRGPLGEKDLDCNGFDSCFSLSPNLMACQEIPTEERPHPYDMGGQSFQHSVDLTGHEGVPTAESPLICNECGKTFRGNPDLIQRQIVHTGEASFMCDDCGKTFSQNSVLKNRHXSHMSEKAFRGHSDFSRHQSHHSSERPYTCTECGKAFSQNSSLKKHQKSHMSEKPYECNECGKAFRRSSNLIQHQRIHSGEKPYVCSECGKAFRRSSNLIKHHRTHTGEKPFECGECGKAFSQSAHLRKHQRVHTGEKPYECNDCGKPFSRVSNLIKHHRVHTGEKPYKCSDCGKAFSQSSSLIQHRRIHTGEKPHVCNVCGKAFSYSSVLRKHQIIHTGEKPYRCSVCGKAFSHSSALIQHQGVHTGDKPYACHECGKTFGRSSNLILHQRVHTGEKPYECTECGKTFSQSSTLIQHQRIHNGLKPHECNQCGKAFNRSSNLIHHQKVHTGEKPYTCVECGKGFSQSSHLIQHQIIHTGERPYKCSECGKAFSQRSVLIQHQRIHTGVKPYDCAACGKAFSQRSKLIKHQLIHTRE.

Basic and acidic residues predominate over residues 1-10; sequence MPSLRTRREE. The disordered stretch occupies residues 1-42; that stretch reads MPSLRTRREEAEMELSAPGPSPWTPAPQARVSDAPAVTHPGS. The necessary for transcription activation stretch occupies residues 62–210; the sequence is YQQPDCDTRT…GVPTAESPLI (149 aa). The C2H2-type 1; degenerate zinc finger occupies 209-231; the sequence is LICNECGKTFRGNPDLIQRQIVH. The C2H2-type 2; degenerate zinc finger occupies 237-259; sequence FMCDDCGKTFSQNSVLKNRHXSH. Residue Lys253 forms a Glycyl lysine isopeptide (Lys-Gly) (interchain with G-Cter in SUMO2) linkage. 7 C2H2-type zinc fingers span residues 284 to 306, 312 to 334, 340 to 362, 368 to 390, 396 to 418, 424 to 446, and 452 to 474; these read YTCT…QKSH, YECN…QRIH, YVCS…HRTH, FECG…QRVH, YECN…HRVH, YKCS…RRIH, and HVCN…QIIH. The required for nuclear localization stretch occupies residues 332–364; sequence RIHSGEKPYVCSECGKAFRRSSNLIKHHRTHTG. The required for nuclear localization stretch occupies residues 464–494; sequence SSVLRKHQIIHTGEKPYRCSVCGKAFSHSSA. The residue at position 478 (Lys478) is an N6-acetyllysine. C2H2-type zinc fingers lie at residues 480–502, 508–530, 536–558, 564–586, 592–614, 620–642, and 648–670; these read YRCS…QGVH, YACH…QRVH, YECT…QRIH, HECN…QKVH, YTCV…QIIH, YKCS…QRIH, and YDCA…QLIH.

Belongs to the krueppel C2H2-type zinc-finger protein family. In terms of assembly, interacts with INCA1; the interaction inhibits INCA1 activity and induces the cell cycle process.

The protein localises to the nucleus. Acts as a transcriptional activator. Promotes cell proliferation by facilitating the cell cycle phase transition from the S to G2/M phase. Involved in both the hemin- and phorbol myristate acetate (PMA)-induced erythroid and megakaryocytic differentiation, respectively. Also plays a role as an inhibitor of cell apoptosis. This chain is Zinc finger protein 16 (ZNF16), found in Pan paniscus (Pygmy chimpanzee).